We begin with the raw amino-acid sequence, 540 residues long: Glucose-6-phosphate isomerase (540 aa).

The active-site Proton donor is the Glu350. Active-site residues include His381 and Lys503.

The protein belongs to the GPI family.

It localises to the cytoplasm. It catalyses the reaction alpha-D-glucose 6-phosphate = beta-D-fructose 6-phosphate. It functions in the pathway carbohydrate biosynthesis; gluconeogenesis. Its pathway is carbohydrate degradation; glycolysis; D-glyceraldehyde 3-phosphate and glycerone phosphate from D-glucose: step 2/4. Catalyzes the reversible isomerization of glucose-6-phosphate to fructose-6-phosphate. This Burkholderia orbicola (strain AU 1054) protein is Glucose-6-phosphate isomerase.